Here is a 316-residue protein sequence, read N- to C-terminus: Ornithine carbamoyltransferase (316 aa).

Carbamoyl phosphate-binding positions include 57-60, Gln-84, Arg-108, and 135-138; these read STRT and HPCQ. Residues Asn-166, Asp-230, and 234-235 contribute to the L-ornithine site; that span reads SM. Carbamoyl phosphate-binding positions include 269–270 and Arg-297; that span reads CL.

It belongs to the aspartate/ornithine carbamoyltransferase superfamily. OTCase family.

The protein localises to the cytoplasm. The catalysed reaction is carbamoyl phosphate + L-ornithine = L-citrulline + phosphate + H(+). It functions in the pathway amino-acid degradation; L-arginine degradation via ADI pathway; carbamoyl phosphate from L-arginine: step 2/2. Functionally, reversibly catalyzes the transfer of the carbamoyl group from carbamoyl phosphate (CP) to the N(epsilon) atom of ornithine (ORN) to produce L-citrulline. The protein is Ornithine carbamoyltransferase of Bacillus anthracis (strain CDC 684 / NRRL 3495).